A 536-amino-acid polypeptide reads, in one-letter code: CTP synthase (536 aa).

Residues 1–266 (MKTKFIFVTG…DEQVVEKLNI (266 aa)) are amidoligase domain. S14 provides a ligand contact to CTP. Residue S14 coordinates UTP. ATP is bound by residues 15–20 (SIGKGL) and D72. Residues D72 and E140 each contribute to the Mg(2+) site. CTP-binding positions include 147–149 (DIE), 187–192 (KTKPTQ), and K223. UTP-binding positions include 187–192 (KTKPTQ) and K223. Residues 292 to 534 (RIAIVGKYVN…IAAALDRKDK (243 aa)) enclose the Glutamine amidotransferase type-1 domain. G354 serves as a coordination point for L-glutamine. C381 (nucleophile; for glutamine hydrolysis) is an active-site residue. L-glutamine is bound by residues 382–385 (LGMQ), E405, and R462. Catalysis depends on residues H507 and E509.

This sequence belongs to the CTP synthase family. In terms of assembly, homotetramer.

The catalysed reaction is UTP + L-glutamine + ATP + H2O = CTP + L-glutamate + ADP + phosphate + 2 H(+). The enzyme catalyses L-glutamine + H2O = L-glutamate + NH4(+). It catalyses the reaction UTP + NH4(+) + ATP = CTP + ADP + phosphate + 2 H(+). The protein operates within pyrimidine metabolism; CTP biosynthesis via de novo pathway; CTP from UDP: step 2/2. With respect to regulation, allosterically activated by GTP, when glutamine is the substrate; GTP has no effect on the reaction when ammonia is the substrate. The allosteric effector GTP functions by stabilizing the protein conformation that binds the tetrahedral intermediate(s) formed during glutamine hydrolysis. Inhibited by the product CTP, via allosteric rather than competitive inhibition. Its function is as follows. Catalyzes the ATP-dependent amination of UTP to CTP with either L-glutamine or ammonia as the source of nitrogen. Regulates intracellular CTP levels through interactions with the four ribonucleotide triphosphates. This Geobacter sulfurreducens (strain ATCC 51573 / DSM 12127 / PCA) protein is CTP synthase.